A 104-amino-acid chain; its full sequence is MYAVVVTGGKQYKVAEGDILFVEKLTADVDSTVELDNVLLVGKDNGETVVGKPMVEGAKVTAKVLAQGKAKKVVVFKYKPKKDYRKKQGHRQPYTKIQIEKINA.

It belongs to the bacterial ribosomal protein bL21 family. Part of the 50S ribosomal subunit. Contacts protein L20.

This protein binds to 23S rRNA in the presence of protein L20. The protein is Large ribosomal subunit protein bL21 of Clostridium botulinum (strain ATCC 19397 / Type A).